Reading from the N-terminus, the 205-residue chain is MDVRFPPYIFSMPHLIYNSWLSLNAPKLAQLQLQSIKLVGQDKSINQSELPVNSENISIRVETETNIDSLAKEEKLSEHVHDEKADKIEKTSEDNDTSTLLKLKRRVACDICSKSFCDKGALKIHTSAVHLREMHTCTVTGCGKQFSSRRSRNRHSSNNNPKLHMPESLTLTGSGLSMKTSLDTFWPTRFLLGKDHPLDLSLNLV.

2 C2H2-type zinc fingers span residues 107–130 (VACDICSKSFCDKGALKIHTSAVH) and 135–164 (HTCTVTGCGKQFSSRRSRNRHSSNNNPKLH). The tract at residues 145–168 (QFSSRRSRNRHSSNNNPKLHMPES) is disordered.

As to expression, expressed in the VA and VB motor neurons and at lower levels in the SABV neuron pair.

Its subcellular location is the nucleus. In terms of biological role, probable transcription factor. Involved in motor neuron fate determination and maintenance, acting as a transcriptional repressor to counteract gene activation by transcription factor unc-3 in a subset of motor neurons. Required throughout development to repress transcription by unc-3, probably acting by binding to specific promoter elements. Represses expression of DA and DB motor neuron-specific effector genes, such as unc-129 and unc-53, in VA and VB motor neurons. The protein is Basonuclin zinc finger protein homolog of Caenorhabditis elegans.